The chain runs to 170 residues: Large ribosomal subunit protein uL11 (170 aa).

Belongs to the universal ribosomal protein uL11 family. Part of the ribosomal stalk of the 50S ribosomal subunit. Interacts with L10 and the large rRNA to form the base of the stalk. L10 forms an elongated spine to which L12 dimers bind in a sequential fashion forming a multimeric L10(L12)X complex.

Its function is as follows. Forms part of the ribosomal stalk which helps the ribosome interact with GTP-bound translation factors. This is Large ribosomal subunit protein uL11 from Saccharolobus solfataricus (strain ATCC 35092 / DSM 1617 / JCM 11322 / P2) (Sulfolobus solfataricus).